A 238-amino-acid polypeptide reads, in one-letter code: Doublecortin domain-containing protein (238 aa).

Residues 82–112 (VFERLNDKQFYTGVQKTKFMELLKNNKNKSS) form a partial p25alpha domain region. Residues 151-232 (KTIFLFNNEK…GDPPAPIRNL (82 aa)) form the Doublecortin domain.

In terms of assembly, interacts with alpha-tubulin 1 and beta-tubulin; the interaction stabilizes microtubule assembly.

The protein localises to the cytoplasm. Its subcellular location is the cytoskeleton. Functionally, involved in the stabilization of microtubules. Probably by controlling microtubules stabilization, plays a role in invasion, microneme secretion and parasite growth in host erythrocytes. In Plasmodium falciparum (isolate 3D7), this protein is Doublecortin domain-containing protein.